The sequence spans 575 residues: uncharacterized protein (575 aa).

In terms of domain architecture, HTH marR-type spans 1-120 (MKLIEHYVAL…YNMWLSEVFG (120 aa)). The segment at residues 26–49 (LTEIADCLFCTERNAKLILHKLEN) is a DNA-binding region (H-T-H motif). Residues 176 to 490 (EPKPHLVHGW…FGFLHLLLSE (315 aa)) are solute-binding region.

This sequence in the C-terminal section; belongs to the bacterial solute-binding protein 5 family.

This is an uncharacterized protein from Bacillus subtilis (strain 168).